The sequence spans 226 residues: Late expression factor 7 (226 aa).

The F-box domain maps to 9 to 58 (RAKRIRLPLEIIDTILQYLDPILHAKVVGLTTRVKCRLLRDNNVEDYLKL).

In terms of assembly, interacts with host S-phase kinase-associated protein 1/SKP1.

It localises to the host nucleus. It participates in protein degradation; proteasomal ubiquitin-dependent pathway. Functionally, F-box protein that manipulates the host DNA damage response (DRR) in order to promote viral multiplication. Acts as a substrate recognition component of SKP1/Cullin/F-box (SCF) complexes for targeted protein polyubiquitination. This Lepidoptera (butterflies and moths) protein is Late expression factor 7 (LEF-7).